Reading from the N-terminus, the 238-residue chain is MAPAPSFRGHQWTYNPVRGSCLLLLLVVSNLLLCQGISCPSCGPDMFVSLQKSLIDVFINAASLSHDFHNLSTIMFNEFDEKYAQGKLYYINATKSCHTNSFHTPEERDKAQQMNNEDLSKWTLVLLYSWNNPLYYLLLELRNMKNLSEAVISSAMEIENMSEKLQAFIESQFRKIIVPVLKMIHEVSDTWSRFSSMTFSDEDRSISEYYNLFYCLRRDSRKVDMYIKILTCRTRKTC.

A signal peptide spans 1 to 36; the sequence is MAPAPSFRGHQWTYNPVRGSCLLLLLVVSNLLLCQG. A Zn(2+)-binding site is contributed by H66. N-linked (GlcNAc...) asparagine glycosylation is found at N70, N92, N146, and N160. Cysteines 97 and 215 form a disulfide. D224 provides a ligand contact to Zn(2+). A disulfide bridge connects residues C232 and C238.

It belongs to the somatotropin/prolactin family.

Its subcellular location is the secreted. The polypeptide is Chorionic somatomammotropin hormone 2 (CSH2) (Bos taurus (Bovine)).